A 35-amino-acid chain; its full sequence is Photosystem II reaction center protein T (35 aa).

The helical transmembrane segment at 3 to 23 threads the bilayer; that stretch reads ALVYTFLLVSTLGIIFFAIFF.

The protein belongs to the PsbT family. PSII is composed of 1 copy each of membrane proteins PsbA, PsbB, PsbC, PsbD, PsbE, PsbF, PsbH, PsbI, PsbJ, PsbK, PsbL, PsbM, PsbT, PsbY, PsbZ, Psb30/Ycf12, at least 3 peripheral proteins of the oxygen-evolving complex and a large number of cofactors. It forms dimeric complexes.

It is found in the plastid. It localises to the chloroplast thylakoid membrane. In terms of biological role, found at the monomer-monomer interface of the photosystem II (PS II) dimer, plays a role in assembly and dimerization of PSII. PSII is a light-driven water plastoquinone oxidoreductase, using light energy to abstract electrons from H(2)O, generating a proton gradient subsequently used for ATP formation. This is Photosystem II reaction center protein T from Ceratophyllum demersum (Rigid hornwort).